A 90-amino-acid polypeptide reads, in one-letter code: MENKRQGIIVYLHSLKHSKMLRKFGNVHYVSKRLKYVVLYCDMDLIEKTMEKISSYSYVKKVEPSYKPFLKLEFESKLDKAKEYDYKVGI.

Belongs to the UPF0298 family.

It is found in the cytoplasm. This chain is UPF0298 protein RBAM_014860, found in Bacillus velezensis (strain DSM 23117 / BGSC 10A6 / LMG 26770 / FZB42) (Bacillus amyloliquefaciens subsp. plantarum).